Here is a 299-residue protein sequence, read N- to C-terminus: Ethylmalonyl-CoA decarboxylase (299 aa).

Belongs to the enoyl-CoA hydratase/isomerase family.

It is found in the cytoplasm. The protein resides in the cytosol. The enzyme catalyses (2S)-ethylmalonyl-CoA + H(+) = butanoyl-CoA + CO2. It carries out the reaction (S)-methylmalonyl-CoA + H(+) = propanoyl-CoA + CO2. It catalyses the reaction (2R)-ethylmalonyl-CoA + H(+) = butanoyl-CoA + CO2. Functionally, decarboxylates ethylmalonyl-CoA, a potentially toxic metabolite, to form butyryl-CoA, suggesting it might be involved in metabolite proofreading. Acts preferentially on (S)-ethylmalonyl-CoA but also has some activity on the (R)-isomer. Also has methylmalonyl-CoA decarboxylase activity at lower level. This Xenopus tropicalis (Western clawed frog) protein is Ethylmalonyl-CoA decarboxylase (echdc1).